A 176-amino-acid polypeptide reads, in one-letter code: Disulfide bond formation protein B (176 aa).

The Cytoplasmic portion of the chain corresponds to methionine 1–glutamine 11. A helical transmembrane segment spans residues valine 12–phenylalanine 28. The Periplasmic segment spans residues leucine 29–isoleucine 46. A disulfide bridge connects residues cysteine 38 and cysteine 41. The chain crosses the membrane as a helical span at residues glycine 47–proline 63. Residues lysine 64–leucine 70 are Cytoplasmic-facing. A helical membrane pass occupies residues leucine 71–glycine 88. Residues arginine 89–glutamate 145 are Periplasmic-facing. The cysteines at positions 104 and 131 are disulfide-linked. Residues glutamine 146–arginine 164 form a helical membrane-spanning segment. At isoleucine 165–arginine 176 the chain is on the cytoplasmic side.

This sequence belongs to the DsbB family.

Its subcellular location is the cell inner membrane. Required for disulfide bond formation in some periplasmic proteins. Acts by oxidizing the DsbA protein. This is Disulfide bond formation protein B from Psychrobacter cryohalolentis (strain ATCC BAA-1226 / DSM 17306 / VKM B-2378 / K5).